The chain runs to 128 residues: Large ribosomal subunit protein bL12 (128 aa).

Belongs to the bacterial ribosomal protein bL12 family. As to quaternary structure, homodimer. Part of the ribosomal stalk of the 50S ribosomal subunit. Forms a multimeric L10(L12)X complex, where L10 forms an elongated spine to which 2 to 4 L12 dimers bind in a sequential fashion. Binds GTP-bound translation factors.

Functionally, forms part of the ribosomal stalk which helps the ribosome interact with GTP-bound translation factors. Is thus essential for accurate translation. This chain is Large ribosomal subunit protein bL12, found in Synechococcus sp. (strain CC9902).